The sequence spans 198 residues: Snake venom metalloproteinase BpirMP (198 aa).

The Peptidase M12B domain occupies 1–197 (TYIEVAVVAD…HNPQCILNEP (197 aa)). The Ca(2+) site is built by glutamate 4 and aspartate 88. Cystine bridges form between cysteine 112–cysteine 192, cysteine 152–cysteine 176, and cysteine 154–cysteine 159. Histidine 137 contributes to the Zn(2+) binding site. Glutamate 138 is a catalytic residue. Zn(2+) contacts are provided by histidine 141 and histidine 147. 2 residues coordinate Ca(2+): cysteine 192 and asparagine 195.

This sequence belongs to the venom metalloproteinase (M12B) family. P-I subfamily. Monomer. Zn(2+) serves as cofactor. Expressed by the venom gland.

It is found in the secreted. Inhibited by the chelating agents EDTA, EGTA and 1,10-phenanthroline. Is not inhibited by serine proteinase inhibitors aprotinin, leupeptin and benzamidine. In terms of biological role, zinc metalloprotease that preferentially degrades Aalpha chain of fibrinogen (FGA) (at a dose of 5 ug, whereas at a dose of 10 ug, both FGA and FGB are completely degraded). Degrades fibrin gel in a dose-dependent manner, as well blood clots formed in vitro (thrombolytic activity). Induces hemorrhage (in the dorsal skin of mice), with an MHD of 50 ug. The basal membrane components collagen (all chains of type IV) (COL4A4), fibronectin (FN1), laminin and nidogen are all degraded by this toxin. The protein is Snake venom metalloproteinase BpirMP of Bothrops pirajai (Piraja's lancehead).